Consider the following 316-residue polypeptide: tRNA dimethylallyltransferase (316 aa).

Gly-17–Thr-24 provides a ligand contact to ATP. Thr-19–Thr-24 is a binding site for substrate. Interaction with substrate tRNA regions lie at residues Asp-42–Leu-45, Gln-166–Arg-170, Arg-247–Arg-252, and Lys-280–Arg-287.

The protein belongs to the IPP transferase family. In terms of assembly, monomer. Requires Mg(2+) as cofactor.

The enzyme catalyses adenosine(37) in tRNA + dimethylallyl diphosphate = N(6)-dimethylallyladenosine(37) in tRNA + diphosphate. Catalyzes the transfer of a dimethylallyl group onto the adenine at position 37 in tRNAs that read codons beginning with uridine, leading to the formation of N6-(dimethylallyl)adenosine (i(6)A). This Shigella dysenteriae serotype 1 (strain Sd197) protein is tRNA dimethylallyltransferase.